Consider the following 226-residue polypeptide: PKHD-type hydroxylase PP_0862 (226 aa).

Residues 78–178 (KVFPPLINCY…RYAAFFWTQS (101 aa)) form the Fe2OG dioxygenase domain. Residues His-96, Asp-98, and His-159 each contribute to the Fe cation site. Residue Arg-169 participates in 2-oxoglutarate binding.

The cofactor is Fe(2+). Requires L-ascorbate as cofactor.

In Pseudomonas putida (strain ATCC 47054 / DSM 6125 / CFBP 8728 / NCIMB 11950 / KT2440), this protein is PKHD-type hydroxylase PP_0862.